Consider the following 203-residue polypeptide: Large ribosomal subunit protein bL25 (203 aa).

It belongs to the bacterial ribosomal protein bL25 family. CTC subfamily. In terms of assembly, part of the 50S ribosomal subunit; part of the 5S rRNA/L5/L18/L25 subcomplex. Contacts the 5S rRNA. Binds to the 5S rRNA independently of L5 and L18.

Functionally, this is one of the proteins that binds to the 5S RNA in the ribosome where it forms part of the central protuberance. This chain is Large ribosomal subunit protein bL25, found in Cupriavidus pinatubonensis (strain JMP 134 / LMG 1197) (Cupriavidus necator (strain JMP 134)).